The sequence spans 527 residues: Secologanin synthase 2 (527 aa).

The Lumenal portion of the chain corresponds to 1 to 11; it reads MEMDMDIIRKA. The helical transmembrane segment at 12 to 32 threads the bilayer; that stretch reads IAATIFALVMAWAWRVLDWAW. Over 33–527 the chain is Cytoplasmic; it reads FTPKRIEKRL…IYKKLERQNF (495 aa). Cys-470 is a heme binding site.

The protein belongs to the cytochrome P450 family. The cofactor is heme. In terms of tissue distribution, expressed in leaves (especially in leaf epidermis), and, to a lower extent, in roots, stems, flower buds and flowers.

The protein resides in the endoplasmic reticulum membrane. It carries out the reaction loganin + reduced [NADPH--hemoprotein reductase] + O2 = secologanin + oxidized [NADPH--hemoprotein reductase] + 2 H2O + H(+). The catalysed reaction is secologanin + reduced [NADPH--hemoprotein reductase] + O2 = secoxyloganin + oxidized [NADPH--hemoprotein reductase] + H2O + 2 H(+). Its pathway is alkaloid biosynthesis. In terms of biological role, component of the seco-iridoid and derivatives monoterpenoid indole alkaloids (MIAs, e.g. secologanin) biosynthesis pathway. Catalyzes the conversion of loganin into secologanin. Catalyzes the conversion of secologanin into secoxyloganin. The polypeptide is Secologanin synthase 2 (Catharanthus roseus (Madagascar periwinkle)).